The sequence spans 1217 residues: Endonuclease YhcR (1217 aa).

The signal sequence occupies residues 1–46 (MLSVEMISRQNRCHYVYKGGNMMRRILHIVLITALMFLNVMYTFEA). In terms of domain architecture, TNase-like spans 376–517 (GEYEGIVDRV…KKDQKGIWNE (142 aa)). Catalysis depends on residues Arg-404, Glu-412, and Arg-460. The interval 590–828 (LRILSMNDLH…VIFAAHNHQV (239 aa)) is phosphoesterase. The a divalent metal cation site is built by Asp-597, His-599, Asp-647, Asn-680, His-792, and His-824. The 5'-nucleotidase stretch occupies residues 829-1085 (VNGEVNGKLI…AYTKEGRIKL (257 aa)). Residues Phe-965 and 1035-1042 (FMATATGA) contribute to the substrate site. A disordered region spans residues 1087-1142 (EASDIEDPVTEDPITEEPGDDPGTEDPIKEDPRPGEDLPDIKETPGTAPVHQLPPS). Residues 1089 to 1110 (SDIEDPVTEDPITEEPGDDPGT) show a composition bias toward acidic residues. Residues 1112 to 1129 (DPIKEDPRPGEDLPDIKE) show a composition bias toward basic and acidic residues. The LPXTG sorting signal motif lies at 1182 to 1186 (LPDTS). At Thr-1185 the chain carries Pentaglycyl murein peptidoglycan amidated threonine. Positions 1186-1217 (SAGYYNFMVIGAAVTLSGTYLYVRRKRSASRT) are cleaved as a propeptide — removed by sortase.

This sequence in the C-terminal section; belongs to the 5'-nucleotidase family. Ca(2+) is required as a cofactor. Requires Mn(2+) as cofactor.

It localises to the secreted. The protein localises to the cell wall. Requires a minimum of 0.1 mM of calcium for a significant activity. Maximal activity was observed with concentrations of calcium between 1 to 5 mM. Is 10-fold less active with the corresponding concentrations of manganese. Inhibited by NaCl at concentrations of 100 mM and higher. Its function is as follows. Sugar-nonspecific endonuclease that yields nucleotide 3'-monophosphate products. No 5'-nucleotidase activity was detected, using 5'-AMP as the substrate, in the presence of diverse divalent metals and with various pH values. In Bacillus subtilis (strain 168), this protein is Endonuclease YhcR (yhcR).